We begin with the raw amino-acid sequence, 232 residues long: Lipoprotein-releasing system ATP-binding protein LolD (232 aa).

Residues 11-231 enclose the ABC transporter domain; that stretch reads VYLHDIRRQY…SLENGHVVEL (221 aa). 47 to 54 lines the ATP pocket; it reads APSGSGKS.

It belongs to the ABC transporter superfamily. Lipoprotein translocase (TC 3.A.1.125) family. In terms of assembly, the complex is composed of two ATP-binding proteins (LolD) and two transmembrane proteins (LolC and LolE).

Its subcellular location is the cell inner membrane. Functionally, part of the ABC transporter complex LolCDE involved in the translocation of mature outer membrane-directed lipoproteins, from the inner membrane to the periplasmic chaperone, LolA. Responsible for the formation of the LolA-lipoprotein complex in an ATP-dependent manner. The protein is Lipoprotein-releasing system ATP-binding protein LolD of Nitrobacter hamburgensis (strain DSM 10229 / NCIMB 13809 / X14).